We begin with the raw amino-acid sequence, 469 residues long: Mitochondrial adenyl nucleotide antiporter SLC25A25 (469 aa).

The segment at 1-165 is regulatory N-terminal domain; that stretch reads MLCLCLYVPV…LYWKHSTIFD (165 aa). At 1–189 the chain is on the mitochondrial intermembrane side; sequence MLCLCLYVPV…ERQTGMWWRH (189 aa). 3 EF-hand domains span residues 47 to 80, 78 to 113, and 114 to 149; these read TYRQ…QDHE, DHEK…LGVK, and ISEQ…HPVE. Ca(2+) is bound by residues D60, D62, D64, Q66, and E71. The linker region stretch occupies residues 151 to 160; it reads IPEIILYWKH. The interval 166-469 is C-terminal transmembrane transporter domain; the sequence is VGENLTVPDE…LKITLGVQSR (304 aa). Solcar repeat units follow at residues 184 to 270, 278 to 363, and 375 to 463; these read GMWW…IKRL, LRIH…LKNA, and PGVF…LKIT. The helical transmembrane segment at 190 to 207 threads the bilayer; that stretch reads LVAGGGAGAVSRTCTAPL. Topologically, residues 208 to 244 are mitochondrial matrix; sequence DRLKVLMQVHASRSNNMGIVGGFTQMIREGGARSLWR. The helical transmembrane segment at 245–264 threads the bilayer; it reads GNGINVLKIAPESAIKFMAY. Topologically, residues 265–287 are mitochondrial intermembrane; it reads EQIKRLVGSDQETLRIHERLVAG. A helical membrane pass occupies residues 288-301; the sequence is SLAGAIAQSSIYPM. At 302-337 the chain is on the mitochondrial matrix side; that stretch reads EVLKTRMALRKTGQYSGMLDCARRILAREGVAAFYK. A helical membrane pass occupies residues 338-357; the sequence is GYVPNMLGIIPYAGIDLAVY. The Mitochondrial intermembrane portion of the chain corresponds to 358-380; the sequence is ETLKNAWLQHYAVNSADPGVFVL. The helical transmembrane segment at 381–398 threads the bilayer; that stretch reads LACGTMSSTCGQLASYPL. Residues 399-437 are Mitochondrial matrix-facing; it reads ALVRTRMQAQASIEGAPEVTMSSLFKHILRTEGAFGLYR. The helical transmembrane segment at 438 to 457 threads the bilayer; that stretch reads GLAPNFMKVIPAVSISYVVY. Over 458–469 the chain is Mitochondrial intermembrane; it reads ENLKITLGVQSR.

Belongs to the mitochondrial carrier (TC 2.A.29) family. In terms of tissue distribution, widely expressed. Expressed in fetal and adult liver, skeletal muscle, testis, ovary, hippocampus and caudate nucleus. As to expression, expressed in all tissues tested. Expression is restricted to kidney and lung.

The protein localises to the mitochondrion inner membrane. The catalysed reaction is Mg(2+)(out) + phosphate(in) + ATP(out) = Mg(2+)(in) + phosphate(out) + ATP(in). Its activity is regulated as follows. Activated by an increase in cytosolic calcium levels that induce a conformational change of the N-terminal regulatory domain, uncapping the channel and allowing transport. Functionally, electroneutral antiporter that most probably mediates the transport of adenyl nucleotides through the inner mitochondrial membrane. Originally identified as an ATP-magnesium/inorganic phosphate antiporter, it could have a broader specificity for adenyl nucleotides. By regulating the mitochondrial matrix adenyl nucleotide pool could adapt to changing cellular energetic demands and indirectly regulate adenyl nucleotide-dependent metabolic pathways. This chain is Mitochondrial adenyl nucleotide antiporter SLC25A25, found in Homo sapiens (Human).